A 260-amino-acid chain; its full sequence is 3'-5' ssDNA/RNA exonuclease TatD (260 aa).

Glu91, His127, and His152 together coordinate a divalent metal cation.

It belongs to the metallo-dependent hydrolases superfamily. TatD-type hydrolase family. TatD subfamily. As to quaternary structure, monomer. Mg(2+) serves as cofactor.

It localises to the cytoplasm. Functionally, 3'-5' exonuclease that prefers single-stranded DNA and RNA. May play a role in the H(2)O(2)-induced DNA damage repair. The sequence is that of 3'-5' ssDNA/RNA exonuclease TatD from Salmonella typhimurium (strain LT2 / SGSC1412 / ATCC 700720).